A 495-amino-acid chain; its full sequence is Lysine--tRNA ligase (495 aa).

Mg(2+) contacts are provided by glutamate 406 and glutamate 413.

This sequence belongs to the class-II aminoacyl-tRNA synthetase family. In terms of assembly, homodimer. The cofactor is Mg(2+).

The protein resides in the cytoplasm. It catalyses the reaction tRNA(Lys) + L-lysine + ATP = L-lysyl-tRNA(Lys) + AMP + diphosphate. This Leuconostoc mesenteroides subsp. mesenteroides (strain ATCC 8293 / DSM 20343 / BCRC 11652 / CCM 1803 / JCM 6124 / NCDO 523 / NBRC 100496 / NCIMB 8023 / NCTC 12954 / NRRL B-1118 / 37Y) protein is Lysine--tRNA ligase.